The sequence spans 465 residues: E3 ubiquitin-protein ligase parkin (465 aa).

The Ubiquitin-like domain maps to 1–76; it reads MIVFVRFNSS…VHIVQRPWRK (76 aa). Serine 65 bears the Phosphoserine; by PINK1 mark. Positions 77–99 are disordered; that stretch reads GQEMNATGGDDPRNAAGGCEREP. The necessary for PINK1-dependent localization to mitochondria stretch occupies residues 77-237; sequence GQEMNATGGD…LIATNSRNIT (161 aa). An RING-type 0; atypical zinc finger spans residues 141-225; it reads SIYNSFYVYC…PTSDKETSVA (85 aa). Threonine 175 bears the Phosphothreonine; by PINK1 mark. Residues 204-238 are SYT11 binding 1; that stretch reads TSAEFFFKCGAHPTSDKETSVALHLIATNSRNITC. Threonine 217 is modified (phosphothreonine). The interval 234 to 465 is TRIAD supradomain; the sequence is RNITCITCTD…VCMGDHWFDV (232 aa). Zn(2+)-binding residues include cysteine 238, cysteine 241, cysteine 253, histidine 257, cysteine 260, cysteine 263, cysteine 289, cysteine 293, cysteine 332, and cysteine 337. Residues 238–293 form an RING-type 1 zinc finger; the sequence is CITCTDVRSPVLVFQCNSRHVICLDCFHLYCVTRLNDRQFVHDPQLGYSLPCVAGC. The SYT11 binding 2 stretch occupies residues 257–293; the sequence is HVICLDCFHLYCVTRLNDRQFVHDPQLGYSLPCVAGC. Residues 313–377 form an IBR-type zinc finger; sequence NRYQQYGAEE…CKEAYHEGEC (65 aa). Lysine 349 participates in a covalent cross-link: Glycyl lysine isopeptide (Lys-Gly) (interchain with G-Cter in ISG15). Zn(2+) is bound by residues cysteine 352, cysteine 360, cysteine 365, and cysteine 368. Lysine 369 participates in a covalent cross-link: Glycyl lysine isopeptide (Lys-Gly) (interchain with G-Cter in ISG15). Zn(2+) is bound by residues histidine 373 and cysteine 377. An REP region spans residues 378-410; it reads SAVFEASGTTTQAYRVDERAAEQARWEAASKET. Zn(2+) contacts are provided by cysteine 418 and cysteine 421. The segment at 418–449 adopts an RING-type 2; atypical zinc-finger fold; the sequence is CPRCHVPVEKNGGCMHMKCPQPQCRLEWCWNC. The active site involves cysteine 431. 6 residues coordinate Zn(2+): cysteine 436, cysteine 441, cysteine 446, cysteine 449, cysteine 457, and histidine 461.

This sequence belongs to the RBR family. Parkin subfamily. Forms an E3 ubiquitin ligase complex with UBE2L3 or UBE2L6. Mediates 'Lys-63'-linked polyubiquitination by associating with UBE2V1. Part of a SCF-like complex, consisting of PRKN, CUL1 and FBXW7. Interacts with SNCAIP. Binds to the C2A and C2B domains of SYT11. Interacts and regulates the turnover of SEPTIN5. Part of a complex, including STUB1, HSP70 and GPR37. The amount of STUB1 in the complex increases during ER stress. STUB1 promotes the dissociation of HSP70 from PRKN and GPR37, thus facilitating PRKN-mediated GPR37 ubiquitination. HSP70 transiently associates with unfolded GPR37 and inhibits the E3 activity of PRKN, whereas, STUB1 enhances the E3 activity of PRKN through promotion of dissociation of HSP70 from PRKN-GPR37 complexes. Interacts with PSMD4 and PACRG. Interacts with LRRK2. Interacts with RANBP2. Interacts with SUMO1 but not SUMO2, which promotes nuclear localization and autoubiquitination. Interacts (via first RING-type domain) with AIMP2 (via N-terminus). Interacts with PSMA7 and RNF41. Interacts with PINK1. Forms a complex with PINK1 and PARK7. Interacts with CHPF, the interaction with isoform 2 may facilitate PRKN transport into the mitochondria. Interacts with MFN2 (phosphorylated), promotes PRKN localization in dysfunctional depolarized mitochondria. Interacts with FBXO7; this promotes translocation to dysfunctional depolarized mitochondria. Interacts with ZNF746. Interacts with heat shock protein 70 family members, including HSPA1L, HSPA1A and HSPA8; interaction HSPA1L promotes translocation to damaged mitochondria. Interacts with BAG4 and, to a lesser extent, BAG5; interaction with BAG4 inhibits translocation to damaged mitochondria. Forms a complex with PRKN and PARK7. Interacts with AMBRA1. ISGylated. Conjugated to ubiquitin-like protein ISG15 upon IFN-beta stimulation. ISGylation positively regulates its E3 ligase activity. In terms of processing, auto-ubiquitinates in an E2-dependent manner leading to its own degradation. Also polyubiquitinated by RNF41 for proteasomal degradation. Post-translationally, S-nitrosylated. The inhibition of PRKN ubiquitin E3 ligase activity by S-nitrosylation could contribute to the degenerative process in PD by impairing the ubiquitination of PRKN substrates. Phosphorylated. Activation requires phosphorylation at Ser-65 by PINK1 and binding to PINK1 phosphorylated ubiquitin. Phosphorylation at Thr-175 by PINK1 and at Thr-217 is important for mitochondrial localization. As to expression, highly expressed in the brain including the substantia nigra. Expressed in heart, testis and skeletal muscle. Expression is down-regulated or absent in tumor biopsies, and absent in the brain of PARK2 patients. Overexpression protects dopamine neurons from kainate-mediated apoptosis. Found in serum (at protein level).

The protein localises to the cytoplasm. It is found in the cytosol. Its subcellular location is the nucleus. The protein resides in the endoplasmic reticulum. It localises to the mitochondrion. The protein localises to the mitochondrion outer membrane. It is found in the cell projection. Its subcellular location is the neuron projection. The protein resides in the postsynaptic density. It localises to the presynapse. It catalyses the reaction [E2 ubiquitin-conjugating enzyme]-S-ubiquitinyl-L-cysteine + [acceptor protein]-L-lysine = [E2 ubiquitin-conjugating enzyme]-L-cysteine + [acceptor protein]-N(6)-ubiquitinyl-L-lysine.. Its pathway is protein modification; protein ubiquitination. Its activity is regulated as follows. In the autoinhibited state the side chain of Phe-463 inserts into a hydrophobic groove in RING-0, occluding the ubiquitin acceptor site Cys-431, whereas the REP repressor element binds RING-1 and blocks its E2-binding site. Activation of PRKN requires 2 steps: (1) phosphorylation at Ser-65 by PINK1 and (2) binding to phosphorylated ubiquitin, leading to unlock repression of the catalytic Cys-431 by the RING-0 region via an allosteric mechanism and converting PRKN to its fully-active form. According to another report, phosphorylation at Ser-65 by PINK1 is not essential for activation and only binding to phosphorylated ubiquitin is essential to unlock repression. In addition, ISG15 conjugation positively regulates its ubiquitin E3 ligase activity by suppressing the intramolecular interaction that maintains its autoinhibited conformation. In terms of biological role, functions within a multiprotein E3 ubiquitin ligase complex, catalyzing the covalent attachment of ubiquitin moieties onto substrate proteins. Substrates include SYT11 and VDAC1. Other substrates are BCL2, CCNE1, GPR37, RHOT1/MIRO1, MFN1, MFN2, STUB1, SNCAIP, SEPTIN5, TOMM20, USP30, ZNF746, MIRO1 and AIMP2. Mediates monoubiquitination as well as 'Lys-6', 'Lys-11', 'Lys-48'-linked and 'Lys-63'-linked polyubiquitination of substrates depending on the context. Participates in the removal and/or detoxification of abnormally folded or damaged protein by mediating 'Lys-63'-linked polyubiquitination of misfolded proteins such as PARK7: 'Lys-63'-linked polyubiquitinated misfolded proteins are then recognized by HDAC6, leading to their recruitment to aggresomes, followed by degradation. Mediates 'Lys-63'-linked polyubiquitination of a 22 kDa O-linked glycosylated isoform of SNCAIP, possibly playing a role in Lewy-body formation. Mediates monoubiquitination of BCL2, thereby acting as a positive regulator of autophagy. Protects against mitochondrial dysfunction during cellular stress, by acting downstream of PINK1 to coordinate mitochondrial quality control mechanisms that remove and replace dysfunctional mitochondrial components. Depending on the severity of mitochondrial damage and/or dysfunction, activity ranges from preventing apoptosis and stimulating mitochondrial biogenesis to regulating mitochondrial dynamics and eliminating severely damaged mitochondria via mitophagy. Activation and recruitment onto the outer membrane of damaged/dysfunctional mitochondria (OMM) requires PINK1-mediated phosphorylation of both PRKN and ubiquitin. After mitochondrial damage, functions with PINK1 to mediate the decision between mitophagy or preventing apoptosis by inducing either the poly- or monoubiquitination of VDAC1, respectively; polyubiquitination of VDAC1 promotes mitophagy, while monoubiquitination of VDAC1 decreases mitochondrial calcium influx which ultimately inhibits apoptosis. When cellular stress results in irreversible mitochondrial damage, promotes the autophagic degradation of dysfunctional depolarized mitochondria (mitophagy) by promoting the ubiquitination of mitochondrial proteins such as TOMM20, RHOT1/MIRO1, MFN1 and USP30. Preferentially assembles 'Lys-6'-, 'Lys-11'- and 'Lys-63'-linked polyubiquitin chains, leading to mitophagy. The PINK1-PRKN pathway also promotes fission of damaged mitochondria by PINK1-mediated phosphorylation which promotes the PRKN-dependent degradation of mitochondrial proteins involved in fission such as MFN2. This prevents the refusion of unhealthy mitochondria with the mitochondrial network or initiates mitochondrial fragmentation facilitating their later engulfment by autophagosomes. Regulates motility of damaged mitochondria via the ubiquitination and subsequent degradation of MIRO1 and MIRO2; in motor neurons, this likely inhibits mitochondrial intracellular anterograde transport along the axons which probably increases the chance of the mitochondria undergoing mitophagy in the soma. Involved in mitochondrial biogenesis via the 'Lys-48'-linked polyubiquitination of transcriptional repressor ZNF746/PARIS which leads to its subsequent proteasomal degradation and allows activation of the transcription factor PPARGC1A. Limits the production of reactive oxygen species (ROS). Regulates cyclin-E during neuronal apoptosis. In collaboration with CHPF isoform 2, may enhance cell viability and protect cells from oxidative stress. Independently of its ubiquitin ligase activity, protects from apoptosis by the transcriptional repression of p53/TP53. May protect neurons against alpha synuclein toxicity, proteasomal dysfunction, GPR37 accumulation, and kainate-induced excitotoxicity. May play a role in controlling neurotransmitter trafficking at the presynaptic terminal and in calcium-dependent exocytosis. May represent a tumor suppressor gene. The polypeptide is E3 ubiquitin-protein ligase parkin (Homo sapiens (Human)).